The sequence spans 453 residues: MVAVAILAAGRGTRMKSNLPKVLHRLGGYSLVERVLNSCQLLNPSRQLVIIGYEGEQVRDSLQQLDSLEFVEQKEQLGTGHAIQQLLPHLEGFQGDLLVLNGDVPLLRPQTLENLLNIHKTHRNAATLLTAHLPNPKGYGRVFCDNNNLVTQIVEDRDCNAAQKQNHRINGGIYCFNWQQLAAVLPKLSADNDQKEYYLTDVVKFLAPVMAVDVEDYLEITGINDRKQLAMANGILQNRVKDHWMAQGVTLIDPDSITIDDTVELQTDVIIEPQTHLRGKTSIGKGSRLGPGSLIENSHIGDNVTVLYSVITESQVASGCRVGPYSHLRGQAQIGESCRIGNFVEIKKSVIEQKSNVAHLSYLGDATLGEQVNVGAGTITANYDGVQKHRTIIGKGTKTGANSVFVAPVTLGEEVTVAAGSVVTHDVPDRALVIARQRQRIIEEWKKTIESKK.

The segment at 1-226 is pyrophosphorylase; sequence MVAVAILAAG…YLEITGINDR (226 aa). UDP-N-acetyl-alpha-D-glucosamine-binding positions include 7 to 10, Lys21, Gln73, and 78 to 79; these read LAAG and GT. Asp103 lines the Mg(2+) pocket. Gly140, Glu155, Asn170, and Asn224 together coordinate UDP-N-acetyl-alpha-D-glucosamine. A Mg(2+)-binding site is contributed by Asn224. Residues 227–247 form a linker region; that stretch reads KQLAMANGILQNRVKDHWMAQ. The N-acetyltransferase stretch occupies residues 248-453; it reads GVTLIDPDSI…EWKKTIESKK (206 aa). Positions 329 and 347 each coordinate UDP-N-acetyl-alpha-D-glucosamine. Catalysis depends on His359, which acts as the Proton acceptor. Residues Tyr362 and Asn373 each contribute to the UDP-N-acetyl-alpha-D-glucosamine site. Residues Ala376, 382-383, Ala419, and Arg436 each bind acetyl-CoA; that span reads NY.

The protein in the N-terminal section; belongs to the N-acetylglucosamine-1-phosphate uridyltransferase family. It in the C-terminal section; belongs to the transferase hexapeptide repeat family. As to quaternary structure, homotrimer. It depends on Mg(2+) as a cofactor.

The protein localises to the cytoplasm. It carries out the reaction alpha-D-glucosamine 1-phosphate + acetyl-CoA = N-acetyl-alpha-D-glucosamine 1-phosphate + CoA + H(+). The enzyme catalyses N-acetyl-alpha-D-glucosamine 1-phosphate + UTP + H(+) = UDP-N-acetyl-alpha-D-glucosamine + diphosphate. Its pathway is nucleotide-sugar biosynthesis; UDP-N-acetyl-alpha-D-glucosamine biosynthesis; N-acetyl-alpha-D-glucosamine 1-phosphate from alpha-D-glucosamine 6-phosphate (route II): step 2/2. The protein operates within nucleotide-sugar biosynthesis; UDP-N-acetyl-alpha-D-glucosamine biosynthesis; UDP-N-acetyl-alpha-D-glucosamine from N-acetyl-alpha-D-glucosamine 1-phosphate: step 1/1. It functions in the pathway bacterial outer membrane biogenesis; LPS lipid A biosynthesis. In terms of biological role, catalyzes the last two sequential reactions in the de novo biosynthetic pathway for UDP-N-acetylglucosamine (UDP-GlcNAc). The C-terminal domain catalyzes the transfer of acetyl group from acetyl coenzyme A to glucosamine-1-phosphate (GlcN-1-P) to produce N-acetylglucosamine-1-phosphate (GlcNAc-1-P), which is converted into UDP-GlcNAc by the transfer of uridine 5-monophosphate (from uridine 5-triphosphate), a reaction catalyzed by the N-terminal domain. The chain is Bifunctional protein GlmU from Rippkaea orientalis (strain PCC 8801 / RF-1) (Cyanothece sp. (strain PCC 8801)).